The following is a 684-amino-acid chain: Multisite-specific tRNA:(cytosine-C(5))-methyltransferase (684 aa).

Basic residues predominate over residues 1 to 12 (MARRKNFKKGNK). Positions 1–24 (MARRKNFKKGNKKTFGARDDSRAQ) are disordered. Residues 173-179 (CAAPGSK), Asp202, Asp229, and Asp257 each bind S-adenosyl-L-methionine. The active-site Nucleophile is Cys310. Thr426 is modified (phosphothreonine). Position 431 is a phosphoserine (Ser431). The interval 650–684 (KATPSAEEKEKEKETTESPAETTTGTSTEAPSAAN) is disordered. The segment covering 655 to 665 (AEEKEKEKETT) has biased composition (basic and acidic residues). Residues 666–684 (ESPAETTTGTSTEAPSAAN) are compositionally biased toward low complexity. Ser667 carries the post-translational modification Phosphoserine.

It belongs to the class I-like SAM-binding methyltransferase superfamily. RsmB/NOP family. TRM4 subfamily.

The protein localises to the nucleus. It is found in the nucleolus. It carries out the reaction cytidine(34) in tRNA precursor + S-adenosyl-L-methionine = 5-methylcytidine(34) in tRNA precursor + S-adenosyl-L-homocysteine + H(+). It catalyses the reaction cytidine(40) in tRNA precursor + S-adenosyl-L-methionine = 5-methylcytidine(40) in tRNA precursor + S-adenosyl-L-homocysteine + H(+). The catalysed reaction is cytidine(48) in tRNA + S-adenosyl-L-methionine = 5-methylcytidine(48) in tRNA + S-adenosyl-L-homocysteine + H(+). The enzyme catalyses cytidine(49) in tRNA + S-adenosyl-L-methionine = 5-methylcytidine(49) in tRNA + S-adenosyl-L-homocysteine + H(+). Methylates cytosine to m5C at several positions in different tRNAs and pre-tRNAs containing intron. Able to modify tRNAs at all four positions (34, 40, 48 and 49) at which m5C has been found in tRNAs. May be involved in ribosome biogenesis as its disruption leads to increased sensitivity to the antibiotic paromomycin. This chain is Multisite-specific tRNA:(cytosine-C(5))-methyltransferase (NCL1), found in Saccharomyces cerevisiae (strain ATCC 204508 / S288c) (Baker's yeast).